The primary structure comprises 322 residues: Ras-like protein 2 (322 aa).

GTP is bound by residues 20–25 (GVGKSA), 36–42 (VDEYDPT), 66–67 (AG), and 123–126 (NKSD). An Effector region motif is present at residues 39–47 (YDPTIEDSY). Lysine 131 is covalently cross-linked (Glycyl lysine isopeptide (Lys-Gly) (interchain with G-Cter in ubiquitin)). 153–155 (SAK) serves as a coordination point for GTP. A disordered region spans residues 178-322 (YNKTLTENDN…SGSGGCCIIS (145 aa)). The span at 180-205 (KTLTENDNSKQTSQDTKGSGANSVPR) shows a compositional bias: polar residues. A phosphoserine mark is found at serine 198, serine 202, serine 207, serine 214, serine 235, and serine 238. A compositionally biased stretch (polar residues) spans 215–252 (NAANGKNVNSSTTVVNARNASIESKTGLAGNQATNGKT). A compositionally biased stretch (low complexity) spans 261–284 (NSTGQAGQANAQSANTVNNRVNNN). A compositionally biased stretch (polar residues) spans 285 to 294 (SKAGQVSNAK). Cysteine 318 carries S-palmitoyl cysteine lipidation. Residue cysteine 319 is modified to Cysteine methyl ester. Cysteine 319 is lipidated: S-farnesyl cysteine. Positions 320–322 (IIS) are cleaved as a propeptide — removed in mature form.

The protein belongs to the small GTPase superfamily. Ras family. Post-translationally, farnesylated by RAM1-RAM2, which is required for targeting RAS2 to the cytoplasmic site of the endoplasmic reticulum, where proteolytic processing of the C-terminus by RCE1 and methylation of the resulting carboxyl group by STE14 occurs. Palmitoylated by the ERF2-SHR5 complex, which is required for proper plasma membrane localization of RAS2.

It localises to the cell membrane. It catalyses the reaction GTP + H2O = GDP + phosphate + H(+). Its activity is regulated as follows. Alternates between an inactive form bound to GDP and an active form bound to GTP. Activated by guanine nucleotide-exchange factor (GEF) CDC25 and inactivated by GTPase-activating proteins (GAPs) IRA1 and IRA2. Its function is as follows. The S.cerevisiae Ras proteins modulate the activity of the adenylate cyclase catalytic subunit and therefore affect the biosynthesis of cyclic-AMP. The protein is Ras-like protein 2 (RAS2) of Saccharomyces cerevisiae (strain ATCC 204508 / S288c) (Baker's yeast).